The following is a 434-amino-acid chain: 3-phosphoshikimate 1-carboxyvinyltransferase (434 aa).

3-phosphoshikimate contacts are provided by K22, S23, and R27. Position 22 (K22) interacts with phosphoenolpyruvate. The phosphoenolpyruvate site is built by G93 and R121. S168, S169, Q170, S199, D320, and K347 together coordinate 3-phosphoshikimate. Q170 provides a ligand contact to phosphoenolpyruvate. D320 serves as the catalytic Proton acceptor. Residues R351, R394, and K419 each coordinate phosphoenolpyruvate.

It belongs to the EPSP synthase family. As to quaternary structure, monomer.

The protein localises to the cytoplasm. It catalyses the reaction 3-phosphoshikimate + phosphoenolpyruvate = 5-O-(1-carboxyvinyl)-3-phosphoshikimate + phosphate. The protein operates within metabolic intermediate biosynthesis; chorismate biosynthesis; chorismate from D-erythrose 4-phosphate and phosphoenolpyruvate: step 6/7. In terms of biological role, catalyzes the transfer of the enolpyruvyl moiety of phosphoenolpyruvate (PEP) to the 5-hydroxyl of shikimate-3-phosphate (S3P) to produce enolpyruvyl shikimate-3-phosphate and inorganic phosphate. The protein is 3-phosphoshikimate 1-carboxyvinyltransferase of Burkholderia cenocepacia (strain HI2424).